We begin with the raw amino-acid sequence, 257 residues long: Transmembrane protein C257L (257 aa).

The next 2 membrane-spanning stretches (helical) occupy residues 123–143 and 163–183; these read LELLGYSPTSLIGGDLMFTAL and MMIFFLIILLCIILGIFYVLV.

The protein belongs to the asfivirus C257R family.

The protein resides in the host membrane. It localises to the virion. This is Transmembrane protein C257L from Ornithodoros (relapsing fever ticks).